The primary structure comprises 476 residues: Nyctalopin (476 aa).

The N-terminal stretch at 1 to 18 is a signal peptide; sequence MLILLLHAVVFSLPYTRA. Residues 19-57 enclose the LRRNT domain; that stretch reads TEACLRACPAACTCSHVERGCSVRCDRAGLQRVPQEFPC. LRR repeat units follow at residues 58 to 79, 82 to 103, 106 to 128, 131 to 154, 155 to 177, 178 to 199, 202 to 223, 226 to 247, 250 to 271, 274 to 295, and 298 to 319; these read EAASIDLDRNGLRILGERAFGT, SLRRLSLRHNNLSFITPGAFKG, RLAELRLAHNGELRYLHVRTFAA, RLRRLDLAACRLFSVPERLLAELP, ALRELTAFDNLFRRVPGALRGLA, NLTHAHFERSRIEAVASGSLLG, RLRSLSLQANRVRAVHAGAFGD, ALEDLLLNDNLLATLPAAAFRG, RLRTLNLGGNALGSVARAWFSD, ELELLYLDRNSITFVEEGAFQN, and GLLALHLNGNRLTVLSWAAFQP. N-linked (GlcNAc...) asparagine glycosylation occurs at asparagine 92. Asparagine 178 carries an N-linked (GlcNAc...) asparagine glycan. Asparagine 295 carries an N-linked (GlcNAc...) asparagine glycan. The 53-residue stretch at 331–383 folds into the LRRCT domain; the sequence is NPWRCDCQLEWLRDWMEGSGRVADVACASPGSVAGQDLSQVVFERSSDGLCVD. N-linked (GlcNAc...) asparagine glycans are attached at residues asparagine 388, asparagine 427, asparagine 434, and asparagine 438.

It belongs to the small leucine-rich proteoglycan (SLRP) family. SLRP class IV subfamily. Expressed abundantly in retina with lower levels in brain, lung, spleen and testis. Not detected in kidney, heart or liver. In the retina, highest expression found in the inner nuclear layer and ganglion cell layer.

It is found in the secreted. It localises to the extracellular space. The protein localises to the extracellular matrix. This Mus musculus (Mouse) protein is Nyctalopin (Nyx).